Consider the following 88-residue polypeptide: MIKIRLSRHGMKKKPFYQIIIANVRSSRNGKFIERVGFFNPFAKKNEEKIRISTKRIQYWLEKGAKKTNRIKNLLIQFKKISSNNIKI.

This sequence belongs to the bacterial ribosomal protein bS16 family.

In Buchnera aphidicola subsp. Cinara cedri (strain Cc), this protein is Small ribosomal subunit protein bS16.